A 471-amino-acid chain; its full sequence is Adenosylhomocysteinase (471 aa).

Residues threonine 58, aspartate 133, and glutamate 195 each coordinate substrate. 196 to 198 is an NAD(+) binding site; that stretch reads TTT. Substrate is bound by residues lysine 225 and aspartate 229. Residues asparagine 230, 259-264, glutamate 282, asparagine 317, 338-340, and asparagine 383 contribute to the NAD(+) site; these read GFGDVG and IGH.

This sequence belongs to the adenosylhomocysteinase family. NAD(+) serves as cofactor.

Its subcellular location is the cytoplasm. The catalysed reaction is S-adenosyl-L-homocysteine + H2O = L-homocysteine + adenosine. Its pathway is amino-acid biosynthesis; L-homocysteine biosynthesis; L-homocysteine from S-adenosyl-L-homocysteine: step 1/1. May play a key role in the regulation of the intracellular concentration of adenosylhomocysteine. The sequence is that of Adenosylhomocysteinase from Rhodopseudomonas palustris (strain BisB5).